The following is a 346-amino-acid chain: MSYQVSVAVVGATGYVGVELVRLLLSHPMVKIKYLCATQSSGKLLSSNYFHISQDDISVNISSFDDIDLSKVDVVFLCLPHGTSSEVVRKIHDVVRIIDLSADFRIKDAEVYKQWYGSHCCPDLVRDFVYGLTEIYWEDIQRSRFIACPGCYPTSVLIPLFPLLRLCLIKSQGIIVDAKSGVSGAGRSVKQDKLFCEVYDVIKSYKISDHRHIPEIEQELCFAACREDINLQFVPNLIPVKRGMMSSIYLELEEGVSLTDVREALLLFYKDSSFVFIDEEKAMTTRSVVGTNYCYLGVFPGRVPNTIIIMSVIDNLLKGAAGQAVQNFNVMMSYDEKIALSNIPYF.

Residue C151 is part of the active site.

Belongs to the NAGSA dehydrogenase family. Type 1 subfamily.

It is found in the cytoplasm. The catalysed reaction is N-acetyl-L-glutamate 5-semialdehyde + phosphate + NADP(+) = N-acetyl-L-glutamyl 5-phosphate + NADPH + H(+). It participates in amino-acid biosynthesis; L-arginine biosynthesis; N(2)-acetyl-L-ornithine from L-glutamate: step 3/4. Its function is as follows. Catalyzes the NADPH-dependent reduction of N-acetyl-5-glutamyl phosphate to yield N-acetyl-L-glutamate 5-semialdehyde. This is N-acetyl-gamma-glutamyl-phosphate reductase from Ehrlichia chaffeensis (strain ATCC CRL-10679 / Arkansas).